Reading from the N-terminus, the 259-residue chain is Glucose-1-phosphate thymidylyltransferase (259 aa).

Belongs to the inositol monophosphatase superfamily.

The catalysed reaction is dTTP + alpha-D-glucose 1-phosphate + H(+) = dTDP-alpha-D-glucose + diphosphate. It functions in the pathway antibiotic biosynthesis; streptomycin biosynthesis. The protein is Glucose-1-phosphate thymidylyltransferase (strO) of Streptomyces griseus.